A 389-amino-acid polypeptide reads, in one-letter code: Na(+)/H(+) antiporter NhaA (389 aa).

A run of 10 helical transmembrane segments spans residues 8–28 (INFL…ALVW), 48–68 (ISLH…MAAI), 91–111 (MATL…NALI), 119–139 (GWGI…RVVF), 173–193 (NPVA…AYLL), 214–234 (AGLY…VPFL), 262–282 (WKIF…GVEF), 288–308 (LTWL…FLMG), 327–347 (LLVA…VSGV), and 361–381 (GALF…VLGI).

It belongs to the NhaA Na(+)/H(+) (TC 2.A.33) antiporter family.

Its subcellular location is the cell membrane. It catalyses the reaction Na(+)(in) + 2 H(+)(out) = Na(+)(out) + 2 H(+)(in). Its function is as follows. Na(+)/H(+) antiporter that extrudes sodium in exchange for external protons. In Desulfitobacterium hafniense (strain DSM 10664 / DCB-2), this protein is Na(+)/H(+) antiporter NhaA.